The primary structure comprises 249 residues: 5'-nucleotidase SurE (249 aa).

Residues D9, D10, S40, and N92 each coordinate a divalent metal cation.

The protein belongs to the SurE nucleotidase family. The cofactor is a divalent metal cation.

Its subcellular location is the cytoplasm. The enzyme catalyses a ribonucleoside 5'-phosphate + H2O = a ribonucleoside + phosphate. Functionally, nucleotidase that shows phosphatase activity on nucleoside 5'-monophosphates. The polypeptide is 5'-nucleotidase SurE (Shewanella loihica (strain ATCC BAA-1088 / PV-4)).